Here is a 375-residue protein sequence, read N- to C-terminus: Anhydro-N-acetylmuramic acid kinase (375 aa).

Gly-12–Asp-19 is an ATP binding site.

The protein belongs to the anhydro-N-acetylmuramic acid kinase family.

The catalysed reaction is 1,6-anhydro-N-acetyl-beta-muramate + ATP + H2O = N-acetyl-D-muramate 6-phosphate + ADP + H(+). It participates in amino-sugar metabolism; 1,6-anhydro-N-acetylmuramate degradation. It functions in the pathway cell wall biogenesis; peptidoglycan recycling. Functionally, catalyzes the specific phosphorylation of 1,6-anhydro-N-acetylmuramic acid (anhMurNAc) with the simultaneous cleavage of the 1,6-anhydro ring, generating MurNAc-6-P. Is required for the utilization of anhMurNAc either imported from the medium or derived from its own cell wall murein, and thus plays a role in cell wall recycling. This Variovorax paradoxus (strain S110) protein is Anhydro-N-acetylmuramic acid kinase.